A 49-amino-acid polypeptide reads, in one-letter code: Light-harvesting protein B-875 beta chain (49 aa).

The Cytoplasmic segment spans residues 2 to 27 (ADKSDLGYTGLTDEQAQELHSVYMSG). A bacteriochlorophyll-binding residues include His-21 and His-39. Residues 28 to 45 (LWPFSAVAIVAHLAVYIW) form a helical; Signal-anchor for type II membrane protein membrane-spanning segment. The Periplasmic portion of the chain corresponds to 46-49 (RPWF).

This sequence belongs to the antenna complex beta subunit family. In terms of assembly, the core complex is formed by different alpha and beta chains, binding bacteriochlorophyll molecules, and arranged most probably in tetrameric structures disposed around the reaction center. The non-pigmented gamma chains may constitute additional components.

The protein resides in the cell inner membrane. In terms of biological role, antenna complexes are light-harvesting systems, which transfer the excitation energy to the reaction centers. The polypeptide is Light-harvesting protein B-875 beta chain (pufB) (Cereibacter sphaeroides (Rhodobacter sphaeroides)).